Consider the following 394-residue polypeptide: 8-amino-7-oxononanoate synthase (394 aa).

Arg21 serves as a coordination point for substrate. Residue 112–113 (GY) coordinates pyridoxal 5'-phosphate. His137 contacts substrate. Pyridoxal 5'-phosphate contacts are provided by Ser183, His211, and Thr239. N6-(pyridoxal phosphate)lysine is present on Lys242. Thr358 contacts substrate.

Belongs to the class-II pyridoxal-phosphate-dependent aminotransferase family. BioF subfamily. Homodimer. The cofactor is pyridoxal 5'-phosphate.

It catalyses the reaction 6-carboxyhexanoyl-[ACP] + L-alanine + H(+) = (8S)-8-amino-7-oxononanoate + holo-[ACP] + CO2. Its pathway is cofactor biosynthesis; biotin biosynthesis. Catalyzes the decarboxylative condensation of pimeloyl-[acyl-carrier protein] and L-alanine to produce 8-amino-7-oxononanoate (AON), [acyl-carrier protein], and carbon dioxide. The chain is 8-amino-7-oxononanoate synthase from Burkholderia cenocepacia (strain ATCC BAA-245 / DSM 16553 / LMG 16656 / NCTC 13227 / J2315 / CF5610) (Burkholderia cepacia (strain J2315)).